A 189-amino-acid polypeptide reads, in one-letter code: Ion-translocating oxidoreductase complex subunit B (189 aa).

The interval 1–26 (MSGIFIAIILLTILALLFGILLGFAA) is hydrophobic. The 4Fe-4S domain occupies 32–90 (EGDPLVDQLEALLPQTQCGQCGYPGCRPYAEAIANGEKINLCPPGGSATMEKLAEMAGV). Residues Cys49, Cys52, Cys57, Cys73, Cys114, Cys117, Cys120, Cys124, Cys144, Cys147, Cys150, and Cys154 each contribute to the [4Fe-4S] cluster site. 4Fe-4S ferredoxin-type domains follow at residues 105–134 (KVAY…GSGK) and 135–164 (LMHT…MLPV).

It belongs to the 4Fe4S bacterial-type ferredoxin family. RnfB subfamily. The complex is composed of six subunits: RnfA, RnfB, RnfC, RnfD, RnfE and RnfG. [4Fe-4S] cluster is required as a cofactor.

The protein resides in the cell inner membrane. Part of a membrane-bound complex that couples electron transfer with translocation of ions across the membrane. The polypeptide is Ion-translocating oxidoreductase complex subunit B (Shewanella sediminis (strain HAW-EB3)).